Reading from the N-terminus, the 52-residue chain is Ovomucoid (52 aa).

Residues Val2 to Cys52 enclose the Kazal-like domain. 3 cysteine pairs are disulfide-bonded: Cys4–Cys34, Cys12–Cys31, and Cys20–Cys52. Asn41 carries an N-linked (GlcNAc...) asparagine glycan.

Its subcellular location is the secreted. The polypeptide is Ovomucoid (Scythrops novaehollandiae (Channel-billed cuckoo)).